A 246-amino-acid polypeptide reads, in one-letter code: Large ribosomal subunit protein uL3 (246 aa).

Gln151 is modified (N5-methylglutamine).

The protein belongs to the universal ribosomal protein uL3 family. In terms of assembly, part of the 50S ribosomal subunit. Forms a cluster with proteins L14 and L19. Post-translationally, methylated by PrmB.

One of the primary rRNA binding proteins, it binds directly near the 3'-end of the 23S rRNA, where it nucleates assembly of the 50S subunit. In Bartonella henselae (strain ATCC 49882 / DSM 28221 / CCUG 30454 / Houston 1) (Rochalimaea henselae), this protein is Large ribosomal subunit protein uL3.